Consider the following 243-residue polypeptide: Aspartate/glutamate leucyltransferase (243 aa).

Belongs to the R-transferase family. Bpt subfamily.

It is found in the cytoplasm. It carries out the reaction N-terminal L-glutamyl-[protein] + L-leucyl-tRNA(Leu) = N-terminal L-leucyl-L-glutamyl-[protein] + tRNA(Leu) + H(+). The enzyme catalyses N-terminal L-aspartyl-[protein] + L-leucyl-tRNA(Leu) = N-terminal L-leucyl-L-aspartyl-[protein] + tRNA(Leu) + H(+). Its function is as follows. Functions in the N-end rule pathway of protein degradation where it conjugates Leu from its aminoacyl-tRNA to the N-termini of proteins containing an N-terminal aspartate or glutamate. The sequence is that of Aspartate/glutamate leucyltransferase from Teredinibacter turnerae (strain ATCC 39867 / T7901).